The sequence spans 503 residues: Pre-glycoprotein polyprotein GP complex (503 aa).

A lipid anchor (N-myristoyl glycine; by host) is attached at G2. Residues 2-17 (GQIVTLIQSIPEVLQE) lie on the Extracellular side of the membrane. Residues 18-33 (VFNVALIIVSVLCIVK) form a helical membrane-spanning segment. At 34-58 (GFVNLMRCGLFQLVTFLILSGRSCD) the chain is on the cytoplasmic side. Zn(2+) is bound at residue C57. Over 59–446 (SMMIDRRHNL…QGKTPLALTD (388 aa)) the chain is Extracellular. 4 cysteine pairs are disulfide-bonded: C86-C248, C293-C306, C315-C324, and C378-C399. 4 N-linked (GlcNAc...) asparagine; by host glycosylation sites follow: N89, N111, N181, and N241. Residues N379, N387, N404, and N409 are each glycosylated (N-linked (GlcNAc...) asparagine; by host). The helical transmembrane segment at 447–467 (ICFWSLVFYTITVFLHIVGIP) threads the bilayer. Topologically, residues 468-503 (THRHIIGDGCPKPHRITRNSLCSCGYYKYQRNLTNG) are cytoplasmic. Residues H469, H471, C477, H481, C489, and C491 each contribute to the Zn(2+) site.

It belongs to the arenaviridae GPC protein family. In terms of assembly, interacts with glycoprotein G2. Part of the GP complex (GP-C) together with glycoprotein G1 and glycoprotein G2. The GP-complex interacts with protein Z, which interacts with ribonucleocapsid; these interactions may induce virion budding. Homotrimer; disulfide-linked. In pre-fusion state, G1 homotrimers bind G2 homotrimers via ionic interactions. Part of the GP complex (GP-C) together with glycoprotein G2 and the stable signal peptide. The GP-complex interacts with protein Z, which interacts with ribonucleocapsid; these interactions may induce virion budding. As to quaternary structure, homotrimer. Interacts with the stable signal peptide. In pre-fusion state, G2 homotrimers bind G1 homotrimers via ionic interactions. Part of the GP complex (GP-C) together with glycoprotein G1 and the stable signal peptide. Acidification in the endosome triggers rearrangements, which ultimately leads to a 6 helix bundle formed by the two heptad repeat domains (HR1 and HR2) in post-fusion state. The GP-complex interacts with protein Z, which interacts with ribonucleocapsid; these interactions may induce virion budding. In terms of processing, specific enzymatic cleavages in vivo yield mature proteins. GP-C polyprotein is cleaved in the endoplasmic reticulum by the host protease MBTPS1. Only cleaved glycoprotein is incorporated into virions. Post-translationally, the SSP remains stably associated with the GP complex following cleavage by signal peptidase and plays crucial roles in the trafficking of GP through the secretory pathway. Myristoylation is necessary for GP2-mediated fusion activity.

The protein localises to the virion membrane. It localises to the host endoplasmic reticulum membrane. It is found in the host Golgi apparatus membrane. Its subcellular location is the host cell membrane. Its function is as follows. Functions as a cleaved signal peptide that is retained as the third component of the GP complex (GP-C). Helps to stabilize the spike complex in its native conformation. The SSP is required for efficient glycoprotein expression, post-translational maturation cleavage of G1 and G2, glycoprotein transport to the cell surface plasma membrane, formation of infectious virus particles, and acid pH-dependent glycoprotein-mediated cell fusion. Functionally, forms the virion spikes together with glycoprotein G2. The glycoprotein spike trimers are connected to the underlying matrix. Interacts with the host receptor leading to virus endocytosis. In terms of biological role, forms the virion spikes together with glycoprotein G1. The glycoprotein spike trimers are connected to the underlying matrix. Class I viral fusion protein that directs fusion of viral and host endosomal membranes, leading to delivery of the nucleocapsid into the cytoplasm. Membrane fusion is mediated by irreversible conformational changes induced by acidification. This chain is Pre-glycoprotein polyprotein GP complex, found in Cavia cutleri (Guinea pig).